A 103-amino-acid polypeptide reads, in one-letter code: Large ribosomal subunit protein bL21 (103 aa).

This sequence belongs to the bacterial ribosomal protein bL21 family. As to quaternary structure, part of the 50S ribosomal subunit. Contacts protein L20.

Functionally, this protein binds to 23S rRNA in the presence of protein L20. This chain is Large ribosomal subunit protein bL21, found in Hahella chejuensis (strain KCTC 2396).